The sequence spans 542 residues: Chaperonin GroEL 1 (542 aa).

ATP-binding positions include 30-33 (TLGP), K51, 87-91 (DGTTT), G415, and D496.

It belongs to the chaperonin (HSP60) family. As to quaternary structure, forms a cylinder of 14 subunits composed of two heptameric rings stacked back-to-back. Interacts with the co-chaperonin GroES.

It is found in the cytoplasm. It carries out the reaction ATP + H2O + a folded polypeptide = ADP + phosphate + an unfolded polypeptide.. In terms of biological role, together with its co-chaperonin GroES, plays an essential role in assisting protein folding. The GroEL-GroES system forms a nano-cage that allows encapsulation of the non-native substrate proteins and provides a physical environment optimized to promote and accelerate protein folding. The chain is Chaperonin GroEL 1 from Sinorhizobium fredii (strain NBRC 101917 / NGR234).